A 225-amino-acid polypeptide reads, in one-letter code: Ribosomal RNA large subunit methyltransferase E (225 aa).

Residues glycine 64, tryptophan 66, aspartate 93, aspartate 109, and aspartate 138 each contribute to the S-adenosyl-L-methionine site. The Proton acceptor role is filled by lysine 178.

This sequence belongs to the class I-like SAM-binding methyltransferase superfamily. RNA methyltransferase RlmE family.

It localises to the cytoplasm. The catalysed reaction is uridine(2552) in 23S rRNA + S-adenosyl-L-methionine = 2'-O-methyluridine(2552) in 23S rRNA + S-adenosyl-L-homocysteine + H(+). Its function is as follows. Specifically methylates the uridine in position 2552 of 23S rRNA at the 2'-O position of the ribose in the fully assembled 50S ribosomal subunit. The chain is Ribosomal RNA large subunit methyltransferase E from Cupriavidus pinatubonensis (strain JMP 134 / LMG 1197) (Cupriavidus necator (strain JMP 134)).